The chain runs to 502 residues: Glutamate--tRNA ligase (502 aa).

The short motif at 9–19 (PSPTGFPHVGT) is the 'HIGH' region element. Residues 250–254 (KLSKR) carry the 'KMSKS' region motif. Lys253 is an ATP binding site.

It belongs to the class-I aminoacyl-tRNA synthetase family. Glutamate--tRNA ligase type 1 subfamily. Monomer.

The protein localises to the cytoplasm. It catalyses the reaction tRNA(Glu) + L-glutamate + ATP = L-glutamyl-tRNA(Glu) + AMP + diphosphate. Its function is as follows. Catalyzes the attachment of glutamate to tRNA(Glu) in a two-step reaction: glutamate is first activated by ATP to form Glu-AMP and then transferred to the acceptor end of tRNA(Glu). The protein is Glutamate--tRNA ligase of Acinetobacter baylyi (strain ATCC 33305 / BD413 / ADP1).